The chain runs to 326 residues: MEAQNQEVAALVEKIAGLHAAISKLPSLSPSAEVDALFTDLVTACVPASPVDVAKLGPEAQAMREELIRLCSAAEGHLEAHYADMLAAFDNPLDHLARFPYYGNYVNLSKLEYDLLVRYVPGIAPTRVAFVGSGPLPFSSLVLAAHHLPDAVFDNYDRCGAANERARRLFRGADEGLGARMAFHTADVATLTGELGAYDVVFLAALVGMAAEEKAGVIAHLGAHMADGAALVVRSAHGARGFLYPIVDLEDIRRGGFDVLAVYHPDDEVINSVIVARKADPRRGGGLAGARGAVPVVSPPCKCCKMEAAAGAFQKAEEFAAKRLSV.

It belongs to the nicotianamine synthase (NAS)-like family. In terms of tissue distribution, expressed in roots.

It catalyses the reaction 3 S-adenosyl-L-methionine = nicotianamine + 3 S-methyl-5'-thioadenosine + 3 H(+). Functionally, synthesizes nicotianamine, a polyamine that is the first intermediate in the synthesis of the phytosiderophores of the mugineic acid type found in gramineae which serve as a sensor for the physiological iron status within the plant, and/or might be involved in the transport of iron. In Oryza sativa subsp. japonica (Rice), this protein is Nicotianamine synthase 2 (NAS2).